Reading from the N-terminus, the 139-residue chain is Nucleoside diphosphate kinase (139 aa).

Positions 11, 59, 87, 93, 104, and 114 each coordinate ATP. The active-site Pros-phosphohistidine intermediate is H117.

It belongs to the NDK family. As to quaternary structure, homotetramer. Mg(2+) is required as a cofactor.

The protein resides in the cytoplasm. The catalysed reaction is a 2'-deoxyribonucleoside 5'-diphosphate + ATP = a 2'-deoxyribonucleoside 5'-triphosphate + ADP. The enzyme catalyses a ribonucleoside 5'-diphosphate + ATP = a ribonucleoside 5'-triphosphate + ADP. In terms of biological role, major role in the synthesis of nucleoside triphosphates other than ATP. The ATP gamma phosphate is transferred to the NDP beta phosphate via a ping-pong mechanism, using a phosphorylated active-site intermediate. The sequence is that of Nucleoside diphosphate kinase from Flavobacterium psychrophilum (strain ATCC 49511 / DSM 21280 / CIP 103535 / JIP02/86).